A 318-amino-acid chain; its full sequence is Trans-prenyltransferase (318 aa).

The helical transmembrane segment at 1 to 21 threads the bilayer; that stretch reads MLHLIYISIIVVLIIILISYT. The isopentenyl diphosphate site is built by Lys85, Arg88, and His122. Mg(2+) contacts are provided by Asp129 and Asp135. Arg140 serves as a coordination point for dimethylallyl diphosphate. Residue Arg141 participates in isopentenyl diphosphate binding. 3 residues coordinate dimethylallyl diphosphate: Lys216, Thr217, and Gln254.

Belongs to the FPP/GGPP synthase family. Asfivirus trans-prenyltransferase subfamily. The cofactor is Mg(2+).

It is found in the host endoplasmic reticulum. The protein localises to the host membrane. The catalysed reaction is isopentenyl diphosphate + dimethylallyl diphosphate = (2E)-geranyl diphosphate + diphosphate. It carries out the reaction isopentenyl diphosphate + (2E)-geranyl diphosphate = (2E,6E)-farnesyl diphosphate + diphosphate. The enzyme catalyses isopentenyl diphosphate + (2E,6E)-farnesyl diphosphate = (2E,6E,10E)-geranylgeranyl diphosphate + diphosphate. It catalyses the reaction isopentenyl diphosphate + (2E,6E,10E)-geranylgeranyl diphosphate = (2E,6E,10E,14E)-geranylfarnesyl diphosphate + diphosphate. The protein operates within isoprenoid biosynthesis; farnesyl diphosphate biosynthesis; farnesyl diphosphate from geranyl diphosphate and isopentenyl diphosphate: step 1/1. It participates in isoprenoid biosynthesis; geranyl diphosphate biosynthesis; geranyl diphosphate from dimethylallyl diphosphate and isopentenyl diphosphate: step 1/1. It functions in the pathway isoprenoid biosynthesis; geranylgeranyl diphosphate biosynthesis; geranylgeranyl diphosphate from farnesyl diphosphate and isopentenyl diphosphate: step 1/1. Trans-prenyltransferase that catalyzes the sequential condensation of isopentenyl diphosphate (IPP) with different allylic diphosphates, such as dimethylallyl diphosphate (DMAPP), geranyl diphosphate (GPP), farnesyl diphosphate (FPP) and geranylgeranyl diphosphate (GGPP), farnesyl diphosphate being the best allylic substrate. This is Trans-prenyltransferase from African swine fever virus (strain Badajoz 1971 Vero-adapted) (Ba71V).